The chain runs to 125 residues: Small ribosomal subunit protein eS8 (125 aa).

Positions 1-36 (MKDQGRSTRKRTGGRLHDVSKKKRHQLGREPAETTV) are disordered. Residues 7-26 (STRKRTGGRLHDVSKKKRHQ) are compositionally biased toward basic residues. A compositionally biased stretch (basic and acidic residues) spans 27–36 (LGREPAETTV).

The protein belongs to the eukaryotic ribosomal protein eS8 family. In terms of assembly, part of the 30S ribosomal subunit.

This chain is Small ribosomal subunit protein eS8, found in Haloquadratum walsbyi (strain DSM 16790 / HBSQ001).